A 763-amino-acid chain; its full sequence is MKLISLLFKQISVVILIDSISTLPSDTEKLCYNSVIVLKLSWSLTLHIQIFMEVWQYGKFQWNDPFFNNDMDDVFNQLFRRMDNQNSEVRGISLMDNRCHRMSLLNTEQLASYPKIIKQWKYLKMVNRLLKKEGFIEKLGTNLTEQARDGLLDPVIDRENEIQKPAQKFCRRRKKNPLLVGESGVGKTAVVEGLAQRIVAGKVPETIQDKEIYSIDLSSLEAGTQYRGSFEENIKQLVEEVKAAGNIILFIDEIHQILGTGALAGEEVKGLADIIKPLLCHVAKLSVIGATTQDEYRNTILKNAALARRFNDVVINEPTAADTLRILQGIKELYEKHHHVVLPDDEKKAAVDYSIKYIHNRHLPDKAIDLIDDCGSFSGKNSQTDVETLDQRLKNKRQLRRPAIKSEDFAKAADIKRVDRGTKQKIKKTHQKEKITATIDDVAQSVERLTGIPVSDMGANDIEHLKNLDKRLKVMVIGEDEAVKMVAKAIRRNRAGFSEGDQPKGSFLFVGPTGVGKTELSQALALDMFGNENALFGIDMSEYADRTAVSKLIGTSAGYVGYEDNANTLTERVRRNPYSVILLDEIEKADPQVLTLLLQVMDDGRLTDGQGSVIDFRNTIIIMTSNAGFGNEALSGDKQRVQSLMDKLAPFFAQNFRPEFRNRLDNIVEFSHLTKQDLSQIVDLMLADVQKTLAKKSIKLEVTKAAKDWLMEQGYDEAMGARPLRRVIEQQIRDKVTDFYLDHLDVKNLKADLVDAEIVISAA.

The tract at residues 136-386 (IEKLGTNLTE…FSGKNSQTDV (251 aa)) is i. Residues 181–188 (GESGVGKT) and 511–518 (GPTGVGKT) each bind ATP. The II stretch occupies residues 437-629 (ATIDDVAQSV…IIIMTSNAGF (193 aa)).

The protein belongs to the ClpA/ClpB family.

In terms of biological role, could be the ATP-dependent specificity component of an ATP-dependent protease. The chain is ATP-dependent Clp protease ATP-binding subunit ClpL (clpL) from Lactococcus lactis subsp. lactis (Streptococcus lactis).